We begin with the raw amino-acid sequence, 233 residues long: Zinc import ATP-binding protein ZnuC (233 aa).

The 217-residue stretch at 6 to 222 folds into the ABC transporter domain; that stretch reads IEFRNVSKKF…SEFSNALSAL (217 aa). 38-45 contacts ATP; that stretch reads GPNGAGKT.

It belongs to the ABC transporter superfamily. Zinc importer (TC 3.A.1.15.5) family. In terms of assembly, the complex is composed of two ATP-binding proteins (ZnuC), two transmembrane proteins (ZnuB) and a solute-binding protein (ZnuA).

It is found in the cell inner membrane. It carries out the reaction Zn(2+)(out) + ATP(in) + H2O(in) = Zn(2+)(in) + ADP(in) + phosphate(in) + H(+)(in). Its function is as follows. Part of the ABC transporter complex ZnuABC involved in zinc import. Responsible for energy coupling to the transport system. This is Zinc import ATP-binding protein ZnuC from Rickettsia conorii (strain ATCC VR-613 / Malish 7).